The sequence spans 329 residues: MALQFFSCKPKYTFLSSLLLLLLLSSSVAELSFNFYAGSCPGAELIVRNTVRSASSSDPSVLGKLLRLIFHDCFVQGCDGSVLIRGNGTERSDPGNASLGGFAVIESVKNILEIFCPGTVSCADILVLAARDAVEALGGPVVPIPTGRRDGRVSMAANVRPNIIDTDFTVDKMINIFSSKGLSVHDLVVLSGAHTIGAAHCNTFNSRFKLDPKGNLELIDASLDNSYAQTLVNKCSSSLDPTTTVVDNDPETSSTFDNQYYKNLLAHKGLFQTDSALMEDDRTRKIVEILANDQESFFDRWTESFLKMSLMGVRVGEEGEIRRSCSAVN.

Positions 1 to 29 (MALQFFSCKPKYTFLSSLLLLLLLSSSVA) are cleaved as a signal peptide. 4 cysteine pairs are disulfide-bonded: C40/C116, C73/C78, C122/C325, and C201/C235. Residue H71 is the Proton acceptor of the active site. D72, V75, G77, D79, and S81 together coordinate Ca(2+). The N-linked (GlcNAc...) asparagine glycan is linked to N87. I164 is a binding site for substrate. H194 serves as a coordination point for heme b. T195 serves as a coordination point for Ca(2+). Ca(2+) contacts are provided by D249, T252, and D257.

Belongs to the peroxidase family. Classical plant (class III) peroxidase subfamily. It depends on heme b as a cofactor. The cofactor is Ca(2+).

It is found in the secreted. It catalyses the reaction 2 a phenolic donor + H2O2 = 2 a phenolic radical donor + 2 H2O. In terms of biological role, removal of H(2)O(2), oxidation of toxic reductants, biosynthesis and degradation of lignin, suberization, auxin catabolism, response to environmental stresses such as wounding, pathogen attack and oxidative stress. These functions might be dependent on each isozyme/isoform in each plant tissue. The sequence is that of Peroxidase 18 (PER18) from Arabidopsis thaliana (Mouse-ear cress).